Reading from the N-terminus, the 225-residue chain is UPF0128 protein PH1314 (225 aa).

Belongs to the UPF0128 family.

In Pyrococcus horikoshii (strain ATCC 700860 / DSM 12428 / JCM 9974 / NBRC 100139 / OT-3), this protein is UPF0128 protein PH1314.